The following is a 1189-amino-acid chain: Pesticidal crystal protein Cry1Ca (1189 aa).

This sequence belongs to the delta endotoxin family.

In terms of biological role, promotes colloidosmotic lysis by binding to the midgut epithelial cells of many lepidopteran larvae including Spodoptera species. This chain is Pesticidal crystal protein Cry1Ca (cry1Ca), found in Bacillus thuringiensis subsp. entomocidus.